We begin with the raw amino-acid sequence, 352 residues long: Uroporphyrinogen decarboxylase (352 aa).

Residues 27–31, Asp77, Tyr154, Thr209, and His325 each bind substrate; that span reads RQAGR.

Belongs to the uroporphyrinogen decarboxylase family. In terms of assembly, homodimer.

The protein resides in the cytoplasm. It carries out the reaction uroporphyrinogen III + 4 H(+) = coproporphyrinogen III + 4 CO2. The protein operates within porphyrin-containing compound metabolism; protoporphyrin-IX biosynthesis; coproporphyrinogen-III from 5-aminolevulinate: step 4/4. Its function is as follows. Catalyzes the decarboxylation of four acetate groups of uroporphyrinogen-III to yield coproporphyrinogen-III. This Legionella pneumophila subsp. pneumophila (strain Philadelphia 1 / ATCC 33152 / DSM 7513) protein is Uroporphyrinogen decarboxylase.